Here is a 454-residue protein sequence, read N- to C-terminus: tRNA-2-methylthio-N(6)-dimethylallyladenosine synthase (454 aa).

Residues 11–128 (KKLYIQTHGC…LPEMIETPRE (118 aa)) enclose the MTTase N-terminal domain. Cys-20, Cys-57, Cys-91, Cys-165, Cys-169, and Cys-172 together coordinate [4Fe-4S] cluster. A Radical SAM core domain is found at 151-382 (EADGATAFVS…QTRIIQQAQE (232 aa)). The TRAM domain maps to 385–449 (RRMVGNTERV…PNSLRGVLLG (65 aa)).

The protein belongs to the methylthiotransferase family. MiaB subfamily. As to quaternary structure, monomer. [4Fe-4S] cluster serves as cofactor.

It localises to the cytoplasm. The enzyme catalyses N(6)-dimethylallyladenosine(37) in tRNA + (sulfur carrier)-SH + AH2 + 2 S-adenosyl-L-methionine = 2-methylsulfanyl-N(6)-dimethylallyladenosine(37) in tRNA + (sulfur carrier)-H + 5'-deoxyadenosine + L-methionine + A + S-adenosyl-L-homocysteine + 2 H(+). Functionally, catalyzes the methylthiolation of N6-(dimethylallyl)adenosine (i(6)A), leading to the formation of 2-methylthio-N6-(dimethylallyl)adenosine (ms(2)i(6)A) at position 37 in tRNAs that read codons beginning with uridine. In Saccharophagus degradans (strain 2-40 / ATCC 43961 / DSM 17024), this protein is tRNA-2-methylthio-N(6)-dimethylallyladenosine synthase.